An 84-amino-acid polypeptide reads, in one-letter code: Small ribosomal subunit protein uS17 (84 aa).

The protein belongs to the universal ribosomal protein uS17 family. In terms of assembly, part of the 30S ribosomal subunit.

One of the primary rRNA binding proteins, it binds specifically to the 5'-end of 16S ribosomal RNA. The polypeptide is Small ribosomal subunit protein uS17 (Clostridioides difficile (strain 630) (Peptoclostridium difficile)).